The chain runs to 216 residues: Movement and silencing protein TGBp1 (216 aa).

In terms of domain architecture, (+)RNA virus helicase ATP-binding spans 1–110 (MEFCGGTLRT…GEVRPAHFTC (110 aa)). A (+)RNA virus helicase C-terminal domain is found at 111–216 (SHTHRFGKST…RHTDSLLILN (106 aa)).

This sequence belongs to the Tymovirales TGBp1 protein family. As to quaternary structure, homodimer and homooligomer. Interacts with capsid protein. Interacts with host AGO1; this interaction targets the host protein for degradation, thereby suppressing the antiviral RNA silencing.

The protein resides in the host cytoplasm. In terms of biological role, transports viral genome to neighboring plant cells directly through plasmosdesmata, without any budding. The movement protein allows efficient cell to cell propagation, by bypassing the host cell wall barrier. Increases plasmodesma size exclusion limit. Acts as a suppressor of RNA-mediated gene silencing, also known as post-transcriptional gene silencing (PTGS), a mechanism of plant viral defense that limits the accumulation of viral RNAs. The protein is Movement and silencing protein TGBp1 of Lilium formosanum.